The primary structure comprises 427 residues: Alpha/beta hydrolase gkaG (427 aa).

Asp-368 is an active-site residue.

It belongs to the AB hydrolase superfamily. Homodimer.

The protein operates within mycotoxin biosynthesis. Alpha/beta hydrolase; part of the gene cluster that mediates the biosynthesis of GKK1032, fungal natural products containing a macrocyclic para-cyclophane connected to a decahydrofluorene ring system that show potent antitumor activities. Within the pathway, gkaG catalyzes the Knoevenagel condensation that affords the 3-pyrrolin-2-one ring, using as substrate the polyketide-tyrosyl acyl thioester product of gkaA. The pathway begins with the PKS-NRPS gkaA which, with the help of the trans-enoyl reductase gkaC, synthesizes the polyketide-tyrosyl acyl thioester product which can be reductively off-loaded by the terminal reductase (R) domain in gkaA. The alpha/beta hydrolase gkaG is then required to catalyze the subsequent Knoevenagel condensation that affords the 3-pyrrolin-2-one ring, whereas the three proteins gkaB, gkaX and gkaZ then function synergistically to form the cyclophane. This Penicillium citrinum protein is Alpha/beta hydrolase gkaG.